Consider the following 638-residue polypeptide: ATP-dependent zinc metalloprotease FtsH (638 aa).

At Met-1–Gln-4 the chain is on the cytoplasmic side. The helical transmembrane segment at Gly-5–Phe-25 threads the bilayer. Residues Gln-26–Thr-103 lie on the Periplasmic side of the membrane. Residues Phe-104–Phe-124 form a helical membrane-spanning segment. Over Met-125–Ser-638 the chain is Cytoplasmic. Gly-195–Thr-202 serves as a coordination point for ATP. A Zn(2+)-binding site is contributed by His-417. Residue Glu-418 is part of the active site. Residues His-421 and Asp-495 each contribute to the Zn(2+) site. A disordered region spans residues Ser-523 to Glu-544.

The protein in the central section; belongs to the AAA ATPase family. This sequence in the C-terminal section; belongs to the peptidase M41 family. In terms of assembly, homohexamer. Zn(2+) is required as a cofactor.

The protein localises to the cell inner membrane. In terms of biological role, acts as a processive, ATP-dependent zinc metallopeptidase for both cytoplasmic and membrane proteins. Plays a role in the quality control of integral membrane proteins. The chain is ATP-dependent zinc metalloprotease FtsH from Rickettsia bellii (strain RML369-C).